Reading from the N-terminus, the 693-residue chain is MA3 DOMAIN-CONTAINING TRANSLATION REGULATORY FACTOR 2 (693 aa).

The disordered stretch occupies residues 25 to 60 (SLDPLPQANMAEDLTKSRRHSPIKVEGSEETWGVED). The MI 1 domain occupies 90 to 211 (EYKKKATVIV…PPAFLKKQMK (122 aa)). The short motif at 241 to 248 (EKRWGGTD) is the Nuclear localization signal 1 element. 3 consecutive MI domains span residues 254-375 (DVKA…SLSA), 389-510 (VFKD…EVLN), and 560-681 (EVKE…EDSQ). Positions 430 to 437 (VKYLITLA) match the Nuclear localization signal 2 motif. Residues 673–693 (ESFASEDSQSKKQNGSSSSSG) are disordered. A compositionally biased stretch (low complexity) spans 683–693 (KKQNGSSSSSG).

Belongs to the PDCD4 family. Binds to EIF4A1. The association with ribosomes is modulated by cellular energy status and TOR activity. In terms of tissue distribution, mostly expressed in reproductive tissues, such as flower buds and flowers, and, to a lower extent, in vegetative tissues, such as leaves, roots and stems.

It is found in the nucleus. The protein resides in the cytoplasm. It localises to the cytosol. In terms of biological role, involved in target of rapamycin (TOR)-regulated translation control, especially under energy-deficient conditions. This chain is MA3 DOMAIN-CONTAINING TRANSLATION REGULATORY FACTOR 2, found in Arabidopsis thaliana (Mouse-ear cress).